The chain runs to 473 residues: Sulfhydrylase-like protein lolC1 (473 aa).

Lys-226 is modified (N6-(pyridoxal phosphate)lysine).

The protein belongs to the trans-sulfuration enzymes family. Pyridoxal 5'-phosphate is required as a cofactor.

Its pathway is alkaloid biosynthesis. Functionally, sulfhydrylase-like protein; part of the gene cluster that mediates the biosynthesis of loline alkaloids, potent insecticidal agents composed of a pyrrolizidine ring system and an uncommon ether bridge linking carbons 2 and 7. Lolines are structurally differentiated by the various modifications of the L-amino group and include norloline, loline, N-methylloline, N-acetylloline, N-acetylnorloline, and N-formylloline. The first committed step is the condensation of O-acetyl-L-homoserine (derived from L-aspartic acid) and L-proline, probably catalyzed by the gamma-type pyridoxal 5'-phosphate(PLP)-dependent enzyme lolC, to give the diamino diacid, NACPP. Ensuing cyclization, decarboxylation, and acetylation steps yield 1-exo-acetamidopyrrolizidine (AcAP). LolO is required for installation of the ether bridge upon the pathway intermediate, 1-exo-acetamidopyrrolizidine (AcAP). In sequential 2-oxoglutarate- and O(2)-consuming steps, lolO removes hydrogens from C2 and C7 of AcAP to form both carbon-oxygen bonds in N-acetylnorloline (NANL), the precursor to all other lolines. The enzymes lolD, lolE, lolF and lolT have also been proposed to be involved in the ether-bridge installation. Further processing of the exocyclic moiety of NANL by fungal N-acetamidase (LolN), methyltransferase (LolM), and cytochrome P450 (LolP) enzymes, with occasional involvement of a plant acetyltransferase, generates the other known lolines. LolN transforms NANL to norlonine which is monomethylated and dimethylated to respectively lonine and N-methyllonine (NML) by lolM. LolP catalyzes hydroxylation of the methyl group in N-methylloline (NML) and further oxygenation to N-formylloline (NFL). A plant acetyltransferase is responsible for the acetylation of loline to form N-acetylloline (NAL). LolA might interact with aspartate kinase to prevent feedback inhibition of its activity by these end products and thereby promote production of L-homoserine from L-aspartate. The sequence is that of Sulfhydrylase-like protein lolC1 from Epichloe uncinata (Endophyte fungus).